Reading from the N-terminus, the 193-residue chain is Segregation and condensation protein B (193 aa).

The protein belongs to the ScpB family. In terms of assembly, homodimer. Homodimerization may be required to stabilize the binding of ScpA to the Smc head domains. Component of a cohesin-like complex composed of ScpA, ScpB and the Smc homodimer, in which ScpA and ScpB bind to the head domain of Smc. The presence of the three proteins is required for the association of the complex with DNA.

Its subcellular location is the cytoplasm. Its function is as follows. Participates in chromosomal partition during cell division. May act via the formation of a condensin-like complex containing Smc and ScpA that pull DNA away from mid-cell into both cell halves. This is Segregation and condensation protein B from Clostridium botulinum (strain 657 / Type Ba4).